A 128-amino-acid polypeptide reads, in one-letter code: Lymphocyte antigen 6 complex locus protein G5c (128 aa).

The N-terminal stretch at 1-29 is a signal peptide; it reads MGAEYGCLPSTSQALYVILLIVLVRMSLV. One can recognise a UPAR/Ly6 domain in the interval 37 to 128; the sequence is LRCYRCLLET…NPQNRVFYIP (92 aa). Intrachain disulfides connect cysteine 39/cysteine 66, cysteine 42/cysteine 51, cysteine 58/cysteine 85, cysteine 94/cysteine 111, and cysteine 112/cysteine 117. Residue asparagine 73 is glycosylated (N-linked (GlcNAc...) asparagine).

As to quaternary structure, forms oligomers. Post-translationally, N-glycosylated. In terms of tissue distribution, abundantly expressed in the epididymis.

The protein resides in the secreted. May have a role in hematopoietic cell differentiation. This chain is Lymphocyte antigen 6 complex locus protein G5c (LY6G5C), found in Canis lupus familiaris (Dog).